The chain runs to 220 residues: UPF0319 protein YccT (220 aa).

An N-terminal signal peptide occupies residues 1 to 20; the sequence is MKTGIVTTLIALCLPVSVFA.

The protein belongs to the UPF0319 family.

The sequence is that of UPF0319 protein YccT from Escherichia coli O139:H28 (strain E24377A / ETEC).